Reading from the N-terminus, the 144-residue chain is Glutamyl-tRNA(Gln) amidotransferase subunit C, mitochondrial (144 aa).

A mitochondrion-targeting transit peptide spans 1–17 (MFRRSVSFVRSHVLRSF).

Belongs to the GatC family. Subunit of the heterotrimeric GatCAB amidotransferase (AdT) complex, composed of A, B and C subunits.

Its subcellular location is the mitochondrion. It carries out the reaction L-glutamyl-tRNA(Gln) + L-glutamine + ATP + H2O = L-glutaminyl-tRNA(Gln) + L-glutamate + ADP + phosphate + H(+). Functionally, allows the formation of correctly charged Gln-tRNA(Gln) through the transamidation of misacylated Glu-tRNA(Gln) in the mitochondria. The reaction takes place in the presence of glutamine and ATP through an activated gamma-phospho-Glu-tRNA(Gln). The protein is Glutamyl-tRNA(Gln) amidotransferase subunit C, mitochondrial of Ixodes scapularis (Black-legged tick).